The chain runs to 443 residues: Xaa-Pro dipeptidase (443 aa).

Residues Asp-246, Asp-257, His-339, Glu-384, and Glu-423 each coordinate Mn(2+).

The protein belongs to the peptidase M24B family. Bacterial-type prolidase subfamily. Mn(2+) is required as a cofactor.

The catalysed reaction is Xaa-L-Pro dipeptide + H2O = an L-alpha-amino acid + L-proline. In terms of biological role, splits dipeptides with a prolyl residue in the C-terminal position. The polypeptide is Xaa-Pro dipeptidase (Shigella dysenteriae serotype 1 (strain Sd197)).